Here is a 155-residue protein sequence, read N- to C-terminus: Ribosome maturation factor RimP (155 aa).

This sequence belongs to the RimP family.

The protein resides in the cytoplasm. Required for maturation of 30S ribosomal subunits. This chain is Ribosome maturation factor RimP, found in Staphylococcus aureus (strain JH9).